We begin with the raw amino-acid sequence, 163 residues long: Crossover junction endodeoxyribonuclease RuvC (163 aa).

Active-site residues include Asp4, Glu65, and Asp138. Positions 4, 65, and 138 each coordinate Mg(2+).

It belongs to the RuvC family. As to quaternary structure, homodimer which binds Holliday junction (HJ) DNA. The HJ becomes 2-fold symmetrical on binding to RuvC with unstacked arms; it has a different conformation from HJ DNA in complex with RuvA. In the full resolvosome a probable DNA-RuvA(4)-RuvB(12)-RuvC(2) complex forms which resolves the HJ. Mg(2+) is required as a cofactor.

The protein localises to the cytoplasm. It carries out the reaction Endonucleolytic cleavage at a junction such as a reciprocal single-stranded crossover between two homologous DNA duplexes (Holliday junction).. The RuvA-RuvB-RuvC complex processes Holliday junction (HJ) DNA during genetic recombination and DNA repair. Endonuclease that resolves HJ intermediates. Cleaves cruciform DNA by making single-stranded nicks across the HJ at symmetrical positions within the homologous arms, yielding a 5'-phosphate and a 3'-hydroxyl group; requires a central core of homology in the junction. The consensus cleavage sequence is 5'-(A/T)TT(C/G)-3'. Cleavage occurs on the 3'-side of the TT dinucleotide at the point of strand exchange. HJ branch migration catalyzed by RuvA-RuvB allows RuvC to scan DNA until it finds its consensus sequence, where it cleaves and resolves the cruciform DNA. The polypeptide is Crossover junction endodeoxyribonuclease RuvC (Corynebacterium jeikeium (strain K411)).